A 432-amino-acid chain; its full sequence is Enolase (432 aa).

Glutamine 167 is a (2R)-2-phosphoglycerate binding site. Glutamate 209 serves as the catalytic Proton donor. Residues aspartate 246, glutamate 287, and aspartate 314 each coordinate Mg(2+). 4 residues coordinate (2R)-2-phosphoglycerate: lysine 339, arginine 368, serine 369, and lysine 390. Lysine 339 serves as the catalytic Proton acceptor.

Belongs to the enolase family. Mg(2+) serves as cofactor.

The protein resides in the cytoplasm. The protein localises to the secreted. It localises to the cell surface. It catalyses the reaction (2R)-2-phosphoglycerate = phosphoenolpyruvate + H2O. Its pathway is carbohydrate degradation; glycolysis; pyruvate from D-glyceraldehyde 3-phosphate: step 4/5. Its function is as follows. Catalyzes the reversible conversion of 2-phosphoglycerate (2-PG) into phosphoenolpyruvate (PEP). It is essential for the degradation of carbohydrates via glycolysis. The polypeptide is Enolase (Prochlorococcus marinus (strain MIT 9211)).